A 1295-amino-acid chain; its full sequence is DNA-directed RNA polymerase subunit beta' (1295 aa).

Zn(2+) contacts are provided by C60, C62, C75, and C78. 3 residues coordinate Mg(2+): D516, D518, and D520. Positions 841, 914, 921, and 924 each coordinate Zn(2+).

It belongs to the RNA polymerase beta' chain family. As to quaternary structure, the RNAP catalytic core consists of 2 alpha, 1 beta, 1 beta' and 1 omega subunit. When a sigma factor is associated with the core the holoenzyme is formed, which can initiate transcription. Mg(2+) serves as cofactor. The cofactor is Zn(2+).

It catalyses the reaction RNA(n) + a ribonucleoside 5'-triphosphate = RNA(n+1) + diphosphate. Functionally, DNA-dependent RNA polymerase catalyzes the transcription of DNA into RNA using the four ribonucleoside triphosphates as substrates. This is DNA-directed RNA polymerase subunit beta' from Dehalococcoides mccartyi (strain CBDB1).